Here is a 401-residue protein sequence, read N- to C-terminus: Nodulation protein E (401 aa).

The Ketosynthase family 3 (KS3) domain maps to 2-400 (DRRVVITGMG…GTNAVLAFKQ (399 aa)). Catalysis depends on for beta-ketoacyl synthase activity residues Cys161, His293, and His330. The helical transmembrane segment at 328-347 (HAHCIGAASALEMIACVMAI) threads the bilayer.

This sequence belongs to the thiolase-like superfamily. Beta-ketoacyl-ACP synthases family.

The protein resides in the cell inner membrane. Its function is as follows. Proposed to synthesize NOD factor fatty acyl chain. Involved in the synthesis of a highly unsaturated fatty acid moiety, which forms part of a lipo-oligosaccharide that is responsible for host specificity. In Rhizobium meliloti (Ensifer meliloti), this protein is Nodulation protein E (nodE).